Consider the following 181-residue polypeptide: MSFQEVWEKEPMKKPRIQKITVNFGVGEAGDRLTIGAKVIEELTGQSPVRTLAKQTNPAYGIRKKLPIGLKVTLRGKNAEEFLKNAFTAFKACGKVLYASSFDQVGNFSFGVPEHIDFPGQKYDPSVGIYGMDVCVTFDKAGYRVKSRKLKRSHIPKKHLVTKDEAIEYIQTKFDTEVVRE.

This sequence belongs to the universal ribosomal protein uL5 family. As to quaternary structure, part of the 50S ribosomal subunit; contacts the 5S rRNA and probably tRNA. Forms a bridge to the 30S subunit in the 70S ribosome.

Its function is as follows. This is one of the proteins that bind and probably mediate the attachment of the 5S RNA into the large ribosomal subunit, where it forms part of the central protuberance. In the 70S ribosome it contacts protein S13 of the 30S subunit (bridge B1b), connecting the 2 subunits; this bridge is implicated in subunit movement. May contact the P site tRNA; the 5S rRNA and some of its associated proteins might help stabilize positioning of ribosome-bound tRNAs. This is Large ribosomal subunit protein uL5 from Methanococcus maripaludis (strain C5 / ATCC BAA-1333).